The primary structure comprises 437 residues: UDP-N-acetylmuramate--L-alanine ligase (437 aa).

114–120 provides a ligand contact to ATP; that stretch reads GTHGKTS.

It belongs to the MurCDEF family.

The protein localises to the cytoplasm. The enzyme catalyses UDP-N-acetyl-alpha-D-muramate + L-alanine + ATP = UDP-N-acetyl-alpha-D-muramoyl-L-alanine + ADP + phosphate + H(+). It functions in the pathway cell wall biogenesis; peptidoglycan biosynthesis. Its function is as follows. Cell wall formation. The chain is UDP-N-acetylmuramate--L-alanine ligase from Lactobacillus gasseri (strain ATCC 33323 / DSM 20243 / BCRC 14619 / CIP 102991 / JCM 1131 / KCTC 3163 / NCIMB 11718 / NCTC 13722 / AM63).